The primary structure comprises 98 residues: Integration host factor subunit alpha (98 aa).

The interval 52–73 is disordered; that stretch reads FDLREKNQRPGRNPKTGEDIPI.

Belongs to the bacterial histone-like protein family. In terms of assembly, heterodimer of an alpha and a beta chain.

In terms of biological role, this protein is one of the two subunits of integration host factor, a specific DNA-binding protein that functions in genetic recombination as well as in transcriptional and translational control. This is Integration host factor subunit alpha from Aeromonas hydrophila subsp. hydrophila (strain ATCC 7966 / DSM 30187 / BCRC 13018 / CCUG 14551 / JCM 1027 / KCTC 2358 / NCIMB 9240 / NCTC 8049).